The primary structure comprises 390 residues: COP9/Signalosome and eIF3 complex-shared subunit 1 (390 aa).

The 164-residue stretch at 188 to 351 (QAAKVMTALL…RTLIVSSYQH (164 aa)) folds into the PCI domain.

The protein belongs to the eIF-3 subunit M family. As to quaternary structure, component of the eukaryotic translation initiation factor 3 (eIF-3) complex. Within the eIF-3 complex, interacts directly with eif-3.F. Component of the CSN complex, composed of csn-1, csn-2, csn-3, csn-4, csn-5, csn-6 and csn-7. Within the CSN complex, interacts directly with csn-1 and csn-4.

It localises to the cytoplasm. Component of the eukaryotic translation initiation factor 3 (eIF-3) complex, which is involved in protein synthesis of a specialized repertoire of mRNAs and, together with other initiation factors, stimulates binding of mRNA and methionyl-tRNAi to the 40S ribosome. The eIF-3 complex specifically targets and initiates translation of a subset of mRNAs involved in cell proliferation (Potential). Component of the COP9 signalosome complex (CSN), a complex involved in various cellular and developmental processes. The CSN complex is an essential regulator of the ubiquitin (Ubl) conjugation pathway by mediating the deneddylation of the cullin subunits of the SCF-type E3 ligase complexes, leading to decrease the Ubl ligase activity of SCF. The CSN complex plays an essential role in embryogenesis and oogenesis and is required to regulate microtubule stability in the early embryo. Mediates mei-1 targeting for degradation at the meiosis to mitosis transition via deneddylation of cul-3. The sequence is that of COP9/Signalosome and eIF3 complex-shared subunit 1 from Caenorhabditis elegans.